The chain runs to 378 residues: uncharacterized protein (378 aa).

Residues 150–176 (TTTATTSNNRFNNNNSNNNNINNNNDN) are compositionally biased toward low complexity. A disordered region spans residues 150-187 (TTTATTSNNRFNNNNSNNNNINNNNDNNNKEQKKESRC). The segment covering 177–187 (NNKEQKKESRC) has biased composition (basic and acidic residues).

This is an uncharacterized protein from Dictyostelium discoideum (Social amoeba).